A 669-amino-acid polypeptide reads, in one-letter code: Methionine--tRNA ligase (669 aa).

The 'HIGH' region motif lies at 14–24 (YYPSGKLHIGN). His-161 is a Zn(2+) binding site. Positions 309–313 (KMSKS) match the 'KMSKS' region motif. ATP is bound at residue Lys-312. Positions 566 to 669 (DFDKVELKVA…KEMPNGAGIA (104 aa)) constitute a tRNA-binding domain.

Belongs to the class-I aminoacyl-tRNA synthetase family. MetG type 2B subfamily. Homodimer.

The protein localises to the cytoplasm. The catalysed reaction is tRNA(Met) + L-methionine + ATP = L-methionyl-tRNA(Met) + AMP + diphosphate. Its function is as follows. Is required not only for elongation of protein synthesis but also for the initiation of all mRNA translation through initiator tRNA(fMet) aminoacylation. In Enterococcus faecalis (strain ATCC 700802 / V583), this protein is Methionine--tRNA ligase.